Here is a 572-residue protein sequence, read N- to C-terminus: Putative two-component response regulator ARR13 (572 aa).

Residues 17–134 (NVMVVDDNRV…DLPKIYQFAL (118 aa)) enclose the Response regulatory domain. The residue at position 71 (aspartate 71) is a 4-aspartylphosphate. Residues 175-225 (KKNCSSKSDTRTVNSTNVSHVSTNGSRKNRKRKPKGGPSDDGESLSQPPKK) are disordered. The span at 179–197 (SSKSDTRTVNSTNVSHVST) shows a compositional bias: polar residues. Positions 224–227 (KKKK) match the Nuclear localization signal motif. A DNA-binding region (myb-like GARP) is located at residues 227–277 (KIWWTNPLQDLFLQAIQHIGYDKVVPKKILAIMNVPYLTRENVASHLQKYR). Residues 509 to 522 (NQDQSNGESSNTIA) show a composition bias toward polar residues. The segment at 509-531 (NQDQSNGESSNTIATPETNTPNF) is disordered.

This sequence belongs to the ARR family. Type-B subfamily. In terms of assembly, binds the target DNA as a monomer. Two-component system major event consists of a His-to-Asp phosphorelay between a sensor histidine kinase (HK) and a response regulator (RR). In plants, the His-to-Asp phosphorelay involves an additional intermediate named Histidine-containing phosphotransfer protein (HPt). This multistep phosphorelay consists of a His-Asp-His-Asp sequential transfer of a phosphate group between first a His and an Asp of the HK protein, followed by the transfer to a conserved His of the HPt protein and finally the transfer to an Asp in the receiver domain of the RR protein.

The protein localises to the nucleus. In terms of biological role, putative transcriptional activator that binds specifically to the DNA sequence 5'-[AG]GATT-3'. Functions as a response regulator involved in His-to-Asp phosphorelay signal transduction system. Phosphorylation of the Asp residue in the receiver domain activates the ability of the protein to promote the transcription of target genes. Could directly activate some type-A response regulators in response to cytokinins. This is Putative two-component response regulator ARR13 (ARR13) from Arabidopsis thaliana (Mouse-ear cress).